Here is a 423-residue protein sequence, read N- to C-terminus: MITKISLILFAVLLVSGLEEEERWKRSLQPGAPNVNNNDQPWQVSPHISRDDSGNTKTDINVQRHGENNDFEAGWSKVVRGPNKAKPTWHIGGTHRWRRSLQPGAPNINNKDQPWQVSPHISRDDNGNTRTNINVQRHGENNDFEAGWSKVVRGPNKAKPTWHIGGTHRWRRSLQPGAPNVNNKDQPWQVSPHISRDDSGNTRTNINVQRHGENNDFEAGWSKVVRGPNKAKPTWHIGGTHRWRRSLQPGAPNVNNKDQPWQVSPHISRDDSGNTNTDINLQRHGENHDFDAGWSKVVRGPNKAKPTWHVGGTYRWRRSVDIPHASTDNVDETFWEFDPHTEDDDDKPVLRLRRSDDEDEEEEEDQPWQLNPNIARGDDGNTRADVNIKRRGENHDFEAGWSKVVDGPDRAKPTWHVGGTFRW.

Residues 1 to 17 (MITKISLILFAVLLVSG) form the signal peptide. Positions 18 to 26 (LEEEERWKR) are excised as a propeptide. Disordered regions lie at residues 28-58 (LQPGAPNVNNNDQPWQVSPHISRDDSGNTKT), 108-128 (INNKDQPWQVSPHISRDDNGN), 180-203 (NVNNKDQPWQVSPHISRDDSGNTR), and 355-385 (SDDEDEEEEEDQPWQLNPNIARGDDGNTRAD). Over residues 34 to 43 (NVNNNDQPWQ) the composition is skewed to polar residues. The span at 180–189 (NVNNKDQPWQ) shows a compositional bias: polar residues. Residues 357–366 (DEDEEEEEDQ) are compositionally biased toward acidic residues. The span at 376-385 (RGDDGNTRAD) shows a compositional bias: basic and acidic residues.

The protein belongs to the coleoptericin family. Hemolymph (at protein level). Larval fat body.

The protein resides in the secreted. Functionally, acaloleptins A1-A4 show antibacterial activity against Gram-negative bacteria but not against Gram-positive bacteria. Acaloleptin A5 shows antibacterial activity against Gram-positive bacteria but not against Gram-negative bacteria, and may also have antifungal activity. The sequence is that of Acaloleptin A from Acalolepta luxuriosa (Udo longhorn beetle).